The primary structure comprises 336 residues: Holliday junction branch migration complex subunit RuvB (336 aa).

The tract at residues 4–184 (SDRLISSQSI…FGIVQRLEYY (181 aa)) is large ATPase domain (RuvB-L). ATP-binding positions include isoleucine 23, arginine 24, glycine 65, lysine 68, threonine 69, threonine 70, 131–133 (EDY), arginine 174, tyrosine 184, and arginine 221. Threonine 69 contributes to the Mg(2+) binding site. Residues 185 to 255 (SVDSLTQIVA…MAQQALEMLE (71 aa)) form a small ATPAse domain (RuvB-S) region. Residues 258–336 (QHGFDLMDRK…HFGFSAIEQE (79 aa)) are head domain (RuvB-H). 2 residues coordinate DNA: arginine 313 and arginine 318.

It belongs to the RuvB family. As to quaternary structure, homohexamer. Forms an RuvA(8)-RuvB(12)-Holliday junction (HJ) complex. HJ DNA is sandwiched between 2 RuvA tetramers; dsDNA enters through RuvA and exits via RuvB. An RuvB hexamer assembles on each DNA strand where it exits the tetramer. Each RuvB hexamer is contacted by two RuvA subunits (via domain III) on 2 adjacent RuvB subunits; this complex drives branch migration. In the full resolvosome a probable DNA-RuvA(4)-RuvB(12)-RuvC(2) complex forms which resolves the HJ.

The protein resides in the cytoplasm. The enzyme catalyses ATP + H2O = ADP + phosphate + H(+). The RuvA-RuvB-RuvC complex processes Holliday junction (HJ) DNA during genetic recombination and DNA repair, while the RuvA-RuvB complex plays an important role in the rescue of blocked DNA replication forks via replication fork reversal (RFR). RuvA specifically binds to HJ cruciform DNA, conferring on it an open structure. The RuvB hexamer acts as an ATP-dependent pump, pulling dsDNA into and through the RuvAB complex. RuvB forms 2 homohexamers on either side of HJ DNA bound by 1 or 2 RuvA tetramers; 4 subunits per hexamer contact DNA at a time. Coordinated motions by a converter formed by DNA-disengaged RuvB subunits stimulates ATP hydrolysis and nucleotide exchange. Immobilization of the converter enables RuvB to convert the ATP-contained energy into a lever motion, pulling 2 nucleotides of DNA out of the RuvA tetramer per ATP hydrolyzed, thus driving DNA branch migration. The RuvB motors rotate together with the DNA substrate, which together with the progressing nucleotide cycle form the mechanistic basis for DNA recombination by continuous HJ branch migration. Branch migration allows RuvC to scan DNA until it finds its consensus sequence, where it cleaves and resolves cruciform DNA. The polypeptide is Holliday junction branch migration complex subunit RuvB (Legionella pneumophila subsp. pneumophila (strain Philadelphia 1 / ATCC 33152 / DSM 7513)).